The following is a 155-amino-acid chain: Myosin light chain alkali (155 aa).

2 EF-hand domains span residues 7–41 (REVE…LNLN) and 80–115 (GCYE…LGES).

In terms of assembly, myosin is a hexamer of 2 heavy chains and 4 light chains. In terms of tissue distribution, indirect flight muscle isoform is found only in the indirect flight muscles. The larval and adult isoform is present in the larval and adult musculature.

This Drosophila melanogaster (Fruit fly) protein is Myosin light chain alkali (Mlc1).